Here is a 323-residue protein sequence, read N- to C-terminus: tRNA dimethylallyltransferase (323 aa).

Residue G13–T20 coordinates ATP. Residue T15–T20 participates in substrate binding. Interaction with substrate tRNA stretches follow at residues D42–L45, Q166–R170, R251–R256, and K284–R291.

Belongs to the IPP transferase family. Monomer. The cofactor is Mg(2+).

It carries out the reaction adenosine(37) in tRNA + dimethylallyl diphosphate = N(6)-dimethylallyladenosine(37) in tRNA + diphosphate. In terms of biological role, catalyzes the transfer of a dimethylallyl group onto the adenine at position 37 in tRNAs that read codons beginning with uridine, leading to the formation of N6-(dimethylallyl)adenosine (i(6)A). The protein is tRNA dimethylallyltransferase of Acidovorax ebreus (strain TPSY) (Diaphorobacter sp. (strain TPSY)).